Consider the following 798-residue polypeptide: Penicillin-binding protein 1A (798 aa).

The Cytoplasmic segment spans residues 1 to 9 (MIKKILTTC). A helical; Signal-anchor for type II membrane protein transmembrane segment spans residues 10–30 (FGLVFGFCVFGVGLVAIAILV). Over 31-798 (TYPKLPSLDS…SKQQQLDSLF (768 aa)) the chain is Periplasmic. A transglycosylase region spans residues 50 to 218 (LTIYSADGEV…SAYNPIVNPE (169 aa)). Glu88 serves as the catalytic Proton donor; for transglycosylase activity. Residues 378 to 700 (RRALGFAARA…GTIAVPVWVD (323 aa)) are transpeptidase. The active-site Acyl-ester intermediate; for transpeptidase activity is Ser461. Positions 738–798 (GLTLDNSGIA…SKQQQLDSLF (61 aa)) are disordered. The span at 768–777 (AADDEVRQDM) shows a compositional bias: basic and acidic residues. Residues 783 to 798 (LPSNTGSKQQQLDSLF) are compositionally biased toward polar residues.

The protein in the N-terminal section; belongs to the glycosyltransferase 51 family. It in the C-terminal section; belongs to the transpeptidase family.

The protein resides in the cell inner membrane. The catalysed reaction is [GlcNAc-(1-&gt;4)-Mur2Ac(oyl-L-Ala-gamma-D-Glu-L-Lys-D-Ala-D-Ala)](n)-di-trans,octa-cis-undecaprenyl diphosphate + beta-D-GlcNAc-(1-&gt;4)-Mur2Ac(oyl-L-Ala-gamma-D-Glu-L-Lys-D-Ala-D-Ala)-di-trans,octa-cis-undecaprenyl diphosphate = [GlcNAc-(1-&gt;4)-Mur2Ac(oyl-L-Ala-gamma-D-Glu-L-Lys-D-Ala-D-Ala)](n+1)-di-trans,octa-cis-undecaprenyl diphosphate + di-trans,octa-cis-undecaprenyl diphosphate + H(+). It catalyses the reaction Preferential cleavage: (Ac)2-L-Lys-D-Ala-|-D-Ala. Also transpeptidation of peptidyl-alanyl moieties that are N-acyl substituents of D-alanine.. It functions in the pathway cell wall biogenesis; peptidoglycan biosynthesis. In terms of biological role, cell wall formation. Synthesis of cross-linked peptidoglycan from the lipid intermediates. The enzyme has a penicillin-insensitive transglycosylase N-terminal domain (formation of linear glycan strands) and a penicillin-sensitive transpeptidase C-terminal domain (cross-linking of the peptide subunits). The protein is Penicillin-binding protein 1A (mrcA) of Neisseria meningitidis serogroup A / serotype 4A (strain DSM 15465 / Z2491).